The sequence spans 138 residues: Single-stranded DNA-binding protein 4 (138 aa).

Residues 1–104 (MINNVVLIGR…VVADSFQILE (104 aa)) form the SSB domain. The interval 107–138 (DNSTNQASMDDQLPPSFGNSQPMDISDDDLPF) is disordered. An Important for interaction with partner proteins motif is present at residues 133–138 (DDDLPF).

In terms of assembly, homotetramer.

Functionally, plays an important role in DNA replication, recombination and repair. Binds to ssDNA and to an array of partner proteins to recruit them to their sites of action during DNA metabolism. This Streptococcus agalactiae serotype V (strain ATCC BAA-611 / 2603 V/R) protein is Single-stranded DNA-binding protein 4 (ssb4).